The chain runs to 953 residues: MTAAENVCYTLINVPMDSEPPSEISLKNDLEKGDVKSKTEALKKVIIMILNGEKLPGLLMTIIRFVLPLQDHTIKKLLLVFWEIVPKTTPDGRLLHEMILVCDAYRKDLQHPNEFIRGSTLRFLCKLKEAELLEPLMPAIRACLEHRHSYVRRNAVLAIYTIYRNFEHLIPDAPELIHDFLVNEKDASCKRNAFMMLIHADQDRALDYLSTCIDQVQTFGDILQLVIVELIYKVCHANPSERARFIRCIYNLLQSSSPAVKYEAAGTLVTLSSAPTAIKAAAQCYIDLIIKESDNNVKLIVLDRLIELKEHPAHERVLQDLVMDILRVLSTPDLEVRKKTLQLALDLVSSRNVEELVIVLKKEVIKTNNVSEHEDTDKYRQLLVRTLHSCSVRFPDMAANVIPVLMEFLSDSNEAAAADVLEFVREAIQRFDNLRMLIVEKMLEVFHAIKSVKIYRGALWILGEYCSTKEDIQSVMTEVRRSLGEIPIVESEIKKEAGELKPEEEITVGPVQKLVTKMGTYATQSALSSSRPTKKEEERPPLRGFLLDGDFFVAASLATTLTKIALRYVALVQEKKRQNSFVAEAMLLMATILHLGKSSPPKKPITDDDVDRISLCLKVLSECSPLMNDIFNKECRQSLSHMLSAKLEEEKLSQKKESEKRNVTVQPDDPISFMQLTAKNEMNCKEDQFQLSLLAAMGNTQRKEAADPLASKLNKVTQLTGFSDPVYAEAYVHVNQYDIVLDVLVVNQTSDTLQNCTLELATLGDLKLVEKPSPLTLAPHDFANIKANVKVASTENGIIFGNIVYDVSGAASDRNCVVLSDIHIDIMDYIQPATCTDAEFRQMWAEFEWENKVTVNTNIIDLNDYLQHILKSTNMKCLTPEKALSGYCGFMAANLYARSIFGEDALANVSIEKPIQQGPEAPVTGHIRIRAKGQGMALSLGDKINLSQKKTSI.

The residue at position 2 (Thr-2) is an N-acetylthreonine. 6 HEAT repeats span residues His-96–Glu-131, Leu-132–His-168, Ser-240–Thr-276, Ala-277–His-314, Arg-316–Val-353, and Asp-396–Asn-433. Lys-494 carries the post-translational modification N6-acetyllysine.

Oligomeric complex that consists of at least the alpha, beta, beta', gamma, delta, epsilon and zeta subunits. Interacts with CAPN8 and PRKCE. Interacts with SCYL1. Interacts with COPG1. Interacts with ARF1 (myristoylated); this interaction is required for binding of COPB1 to Golgi membranes. Interacts (via trunk domain) with ARF1 (via switch I region); the interaction is direct. Interacts with KCNK2 (via N-terminus); this interaction increases the channel-mediated whole cell currents and promotes plasma membrane expression of KCNK2. Interacts with STX17. Interacts with TMEM115. Interacts with TMEM41B. As to expression, high expression in the lung, kidney, skeletal muscle and small intestine, and lower level of expression in heart, liver, spleen, stomach and fat.

The protein localises to the cytoplasm. The protein resides in the golgi apparatus membrane. It localises to the cytoplasmic vesicle. It is found in the COPI-coated vesicle membrane. Its subcellular location is the cell membrane. The protein localises to the endoplasmic reticulum-Golgi intermediate compartment. Functionally, the coatomer is a cytosolic protein complex that binds to dilysine motifs and reversibly associates with Golgi non-clathrin-coated vesicles, which further mediate biosynthetic protein transport from the ER, via the Golgi up to the trans Golgi network. Coatomer complex is required for budding from Golgi membranes, and is essential for the retrograde Golgi-to-ER transport of dilysine-tagged proteins. In mammals, the coatomer can only be recruited by membranes associated to ADP-ribosylation factors (ARFs), which are small GTP-binding proteins; the complex also influences the Golgi structural integrity, as well as the processing, activity, and endocytic recycling of LDL receptors. Plays a functional role in facilitating the transport of kappa-type opioid receptor mRNAs into axons and enhances translation of these proteins. Required for limiting lipid storage in lipid droplets. Involved in lipid homeostasis by regulating the presence of perilipin family members PLIN2 and PLIN3 at the lipid droplet surface and promoting the association of adipocyte surface triglyceride lipase (PNPLA2) with the lipid droplet to mediate lipolysis. Involved in the Golgi disassembly and reassembly processes during cell cycle. Involved in autophagy by playing a role in early endosome function. Plays a role in organellar compartmentalization of secretory compartments including endoplasmic reticulum (ER)-Golgi intermediate compartment (ERGIC), Golgi, trans-Golgi network (TGN) and recycling endosomes, and in biosynthetic transport of CAV1. This is Coatomer subunit beta from Sus scrofa (Pig).